Consider the following 327-residue polypeptide: Cobalamin biosynthesis protein CobD (327 aa).

Transmembrane regions (helical) follow at residues G60–L80, L82–A102, D159–Y179, and L304–L324.

Belongs to the CobD/CbiB family.

It localises to the cell membrane. It functions in the pathway cofactor biosynthesis; adenosylcobalamin biosynthesis. Its function is as follows. Converts cobyric acid to cobinamide by the addition of aminopropanol on the F carboxylic group. The sequence is that of Cobalamin biosynthesis protein CobD from Brucella anthropi (strain ATCC 49188 / DSM 6882 / CCUG 24695 / JCM 21032 / LMG 3331 / NBRC 15819 / NCTC 12168 / Alc 37) (Ochrobactrum anthropi).